The sequence spans 450 residues: NADP-specific glutamate dehydrogenase (450 aa).

Residue Lys111 is part of the active site.

Belongs to the Glu/Leu/Phe/Val dehydrogenases family. In terms of assembly, homohexamer.

The catalysed reaction is L-glutamate + NADP(+) + H2O = 2-oxoglutarate + NH4(+) + NADPH + H(+). The polypeptide is NADP-specific glutamate dehydrogenase (GDHA) (Laccaria bicolor (strain S238N-H82 / ATCC MYA-4686) (Bicoloured deceiver)).